A 192-amino-acid polypeptide reads, in one-letter code: Lipid A acyltransferase PagP (192 aa).

Positions 1–26 (MTVVNKSFLTFLVFFCQILFPLNASA) are cleaved as a signal peptide. Active-site residues include His-64, Asp-107, and Ser-108.

It belongs to the lipid A palmitoyltransferase family. Homodimer.

It localises to the cell outer membrane. It catalyses the reaction a lipid A + a 1,2-diacyl-sn-glycero-3-phosphocholine = a hepta-acyl lipid A + a 2-acyl-sn-glycero-3-phosphocholine. The enzyme catalyses a lipid IVA + a 1,2-diacyl-sn-glycero-3-phosphocholine = a lipid IVB + a 2-acyl-sn-glycero-3-phosphocholine. It carries out the reaction a lipid IIA + a 1,2-diacyl-sn-glycero-3-phosphocholine = a lipid IIB + a 2-acyl-sn-glycero-3-phosphocholine. In terms of biological role, transfers a fatty acid residue from the sn-1 position of a phospholipid to the N-linked hydroxyfatty acid chain on the proximal unit of lipid A or its precursors. This is Lipid A acyltransferase PagP from Cronobacter turicensis (strain DSM 18703 / CCUG 55852 / LMG 23827 / z3032).